We begin with the raw amino-acid sequence, 313 residues long: Putative S-adenosyl-L-methionine-dependent methyltransferase MMAR_0955 (313 aa).

Residues aspartate 132 and 161–162 (DL) each bind S-adenosyl-L-methionine.

The protein belongs to the UPF0677 family.

In terms of biological role, exhibits S-adenosyl-L-methionine-dependent methyltransferase activity. This chain is Putative S-adenosyl-L-methionine-dependent methyltransferase MMAR_0955, found in Mycobacterium marinum (strain ATCC BAA-535 / M).